The primary structure comprises 584 residues: MFAVVFFILSLMTCQPGVTAQEKVNQRVRRAATPAAVTCQLSNWSEWTDCFPCQDKKYRHRSLLQPNKFGGTICSGDIWDQASCSSSTTCVRQAQCGQDFQCKETGRCLKRHLVCNGDQDCLDGSDEDDCEDVRAIDEDCSQYEPIPGSQKAALGYNILTQEDAQSVYDASYYGGQCETVYNGEWRELRYDSTCERLYYGDDEKYFRKPYNFLKYHFEALADTGISSEFYDNANDLLSKVKKDKSDSFGVTIGIGPAGSPLLVGVGVSHSQDTSFLNELNKYNEKKFIFTRIFTKVQTAHFKMRKDDIMLDEGMLQSLMELPDQYNYGMYAKFINDYGTHYITSGSMGGIYEYILVIDKAKMESLGITSRDITTCFGGSLGIQYEDKINVGGGLSGDHCKKFGGGKTERARKAMAVEDIISRVRGGSSGWSGGLAQNRSTITYRSWGRSLKYNPVVIDFEMQPIHEVLRHTSLGPLEAKRQNLRRALDQYLMEFNACRCGPCFNNGVPILEGTSCRCQCRLGSLGAACEQTQTEGAKADGSWSCWSSWSVCRAGIQERRRECDNPAPQNGGASCPGRKVQTQAC.

Residues 1-20 (MFAVVFFILSLMTCQPGVTA) form the signal peptide. The propeptide occupies 21-30 (QEKVNQRVRR). Residues 38 to 91 (TCQLSNWSEWTDCFPCQDKKYRHRSLLQPNKFGGTICSGDIWDQASCSSSTTCV) enclose the TSP type-1 1 domain. Disulfide bonds link cysteine 39-cysteine 74, cysteine 50-cysteine 84, cysteine 53-cysteine 90, cysteine 96-cysteine 108, cysteine 102-cysteine 121, cysteine 115-cysteine 130, and cysteine 140-cysteine 177. Residue tryptophan 44 is glycosylated (C-linked (Man) tryptophan). The LDL-receptor class A domain maps to 94–132 (AQCGQDFQCKETGRCLKRHLVCNGDQDCLDGSDEDDCED). Ca(2+)-binding residues include leucine 113, asparagine 116, aspartate 118, aspartate 120, aspartate 126, and glutamate 127. In terms of domain architecture, MACPF spans 135 to 498 (AIDEDCSQYE…QYLMEFNACR (364 aa)). The next 4 membrane-spanning stretches (beta stranded) occupy residues 248–256 (FGVTIGIGP), 259–266 (SPLLVGVG), 377–384 (GGSLGIQY), and 390–395 (VGGGLS). Cysteine 375 and cysteine 399 form a disulfide bridge. A glycan (N-linked (GlcNAc...) asparagine) is linked at asparagine 437. 4 disulfide bridges follow: cysteine 497–cysteine 544, cysteine 499–cysteine 515, cysteine 502–cysteine 517, and cysteine 519–cysteine 528. Positions 499-529 (CGPCFNNGVPILEGTSCRCQCRLGSLGAACE) constitute an EGF-like domain. The TSP type-1 2 domain occupies 539–583 (DGSWSCWSSWSVCRAGIQERRRECDNPAPQNGGASCPGRKVQTQA). C-linked (Man) tryptophan glycosylation is found at tryptophan 542, tryptophan 545, and tryptophan 548. Cystine bridges form between cysteine 551/cysteine 584 and cysteine 562/cysteine 574. Positions 562–584 (CDNPAPQNGGASCPGRKVQTQAC) are disordered.

This sequence belongs to the complement C6/C7/C8/C9 family. Heterotrimer of 3 chains: alpha (C8A), beta (C8B) and gamma (C8G); the alpha and gamma chains are disulfide bonded. Component of the membrane attack complex (MAC), composed of complement C5b, C6, C7, C8A, C8B, C8G and multiple copies of the pore-forming subunit C9.

It is found in the secreted. The protein localises to the target cell membrane. Its activity is regulated as follows. Membrane attack complex (MAC) assembly is inhibited by CD59, thereby protecting self-cells from damage during complement activation. CD59 acts by binding to the beta-haipins of C8 (C8A and C8B), forming an intermolecular beta-sheet that prevents incorporation of the multiple copies of C9 required for complete formation of the osmolytic pore. MAC assembly is also inhibited by clusterin (CLU) chaperones that inhibit polymerization of C9. Component of the membrane attack complex (MAC), a multiprotein complex activated by the complement cascade, which inserts into a target cell membrane and forms a pore, leading to target cell membrane rupture and cell lysis. The MAC is initiated by proteolytic cleavage of C5 into complement C5b in response to the classical, alternative, lectin and GZMK complement pathways. The complement pathways consist in a cascade of proteins that leads to phagocytosis and breakdown of pathogens and signaling that strengthens the adaptive immune system. C8A, together with C8B and C8G, inserts into the target membrane, but does not form pores by itself. During MAC assembly, associates with C5b, C6 and C7 to form the C5b8 intermediate complex that inserts into the target membrane and traverses the bilayer increasing membrane rigidity. This chain is Complement component C8 alpha chain, found in Homo sapiens (Human).